The sequence spans 492 residues: Protein nucleotidyltransferase YdiU (492 aa).

Residues Gly91, Gly93, Arg94, Lys114, Asp126, Gly127, Arg180, and Arg187 each coordinate ATP. Catalysis depends on Asp256, which acts as the Proton acceptor. Asn257 and Asp266 together coordinate Mg(2+). Position 266 (Asp266) interacts with ATP.

It belongs to the SELO family. Mg(2+) is required as a cofactor. The cofactor is Mn(2+).

The enzyme catalyses L-seryl-[protein] + ATP = 3-O-(5'-adenylyl)-L-seryl-[protein] + diphosphate. It carries out the reaction L-threonyl-[protein] + ATP = 3-O-(5'-adenylyl)-L-threonyl-[protein] + diphosphate. The catalysed reaction is L-tyrosyl-[protein] + ATP = O-(5'-adenylyl)-L-tyrosyl-[protein] + diphosphate. It catalyses the reaction L-histidyl-[protein] + UTP = N(tele)-(5'-uridylyl)-L-histidyl-[protein] + diphosphate. The enzyme catalyses L-seryl-[protein] + UTP = O-(5'-uridylyl)-L-seryl-[protein] + diphosphate. It carries out the reaction L-tyrosyl-[protein] + UTP = O-(5'-uridylyl)-L-tyrosyl-[protein] + diphosphate. In terms of biological role, nucleotidyltransferase involved in the post-translational modification of proteins. It can catalyze the addition of adenosine monophosphate (AMP) or uridine monophosphate (UMP) to a protein, resulting in modifications known as AMPylation and UMPylation. The protein is Protein nucleotidyltransferase YdiU of Synechococcus elongatus (strain ATCC 33912 / PCC 7942 / FACHB-805) (Anacystis nidulans R2).